A 606-amino-acid polypeptide reads, in one-letter code: Anthranilate synthase alpha subunit 2, chloroplastic (606 aa).

A chloroplast-targeting transit peptide spans 1 to 49 (MESIAAATFTPSRLAARPATPAAAAAPVRARAAVAAGGRRRTSRRGGVR).

The protein belongs to the anthranilate synthase component I family. In terms of assembly, heterotetramer consisting of two non-identical subunits: a beta subunit and a large alpha subunit.

The protein localises to the plastid. It is found in the chloroplast. The enzyme catalyses chorismate + L-glutamine = anthranilate + pyruvate + L-glutamate + H(+). It participates in amino-acid biosynthesis; L-tryptophan biosynthesis; L-tryptophan from chorismate: step 1/5. Feedback inhibition by tryptophan. Functionally, part of a heterotetrameric complex that catalyzes the two-step biosynthesis of anthranilate, an intermediate in the biosynthesis of L-tryptophan. In the first step, the glutamine-binding beta subunit of anthranilate synthase (AS) provides the glutamine amidotransferase activity which generates ammonia as a substrate that, along with chorismate, is used in the second step, catalyzed by the large alpha subunit of AS to produce anthranilate. The polypeptide is Anthranilate synthase alpha subunit 2, chloroplastic (Oryza sativa subsp. japonica (Rice)).